A 370-amino-acid chain; its full sequence is Allatostatins (370 aa).

The N-terminal stretch at Met-1–Gly-27 is a signal peptide. Residues Thr-28–Val-65 constitute a propeptide that is removed on maturation. Residues Ala-29–Asp-58 form a disordered region. Residues Leu-73, Leu-94, Leu-105, and Leu-117 each carry the leucine amide modification. Positions Asp-121 to Asp-151 are excised as a propeptide. Leucine amide occurs at positions 161, 172, 188, 200, 213, and 232. Residues Ser-236 to Asp-251 constitute a propeptide that is removed on maturation. Leu-264 is modified (leucine amide). The propeptide occupies Glu-268 to Val-345. Residues Glu-273–His-298 are disordered. Leu-353 is subject to Leucine amide. Ile-364 carries the post-translational modification Isoleucine amide. Residues Ser-368–Arg-370 constitute a propeptide that is removed on maturation.

The protein belongs to the allatostatin family. As to expression, brain, subesophageal ganglion and corpus allatum.

It localises to the secreted. Functionally, neuropeptide inhibitors of juvenile hormone synthesis and gut muscle contraction. This Diploptera punctata (Pacific beetle cockroach) protein is Allatostatins.